The following is a 156-amino-acid chain: Protein-export protein SecB (156 aa).

The protein belongs to the SecB family. Homotetramer, a dimer of dimers. One homotetramer interacts with 1 SecA dimer.

Its subcellular location is the cytoplasm. Its function is as follows. One of the proteins required for the normal export of preproteins out of the cell cytoplasm. It is a molecular chaperone that binds to a subset of precursor proteins, maintaining them in a translocation-competent state. It also specifically binds to its receptor SecA. The protein is Protein-export protein SecB of Yersinia enterocolitica serotype O:8 / biotype 1B (strain NCTC 13174 / 8081).